A 487-amino-acid chain; its full sequence is Ribosome biogenesis protein YTM1 (487 aa).

The segment at 13–95 is ubiquitin-like (UBL) domain; the sequence is VKVTFTTNEA…ETNLTLQYVR (83 aa). WD repeat units lie at residues 122–161, 168–206, 217–256, 379–419, and 451–487; these read SPAG…LVTA, GHSA…ASGQ, GHRA…SPEA, GHTN…PASG, and GEGA…VVRE. Residues 253–277 form a disordered region; that stretch reads SPEADASLLPNAHTSKRRKVASSVT.

The protein belongs to the WD repeat WDR12/YTM1 family. As to quaternary structure, component of the NOP7 complex, composed of ERB1, NOP7 and YTM1. The complex is held together by ERB1, which interacts with NOP7 via its N-terminal domain and with YTM1 via a high-affinity interaction between the seven-bladed beta-propeller domains of the 2 proteins. The NOP7 complex associates with the 66S pre-ribosome. Interacts (via UBL domain) with MDN1 (via VWFA/MIDAS domain).

Its subcellular location is the nucleus. The protein resides in the nucleolus. It localises to the nucleoplasm. Component of the NOP7 complex, which is required for maturation of the 25S and 5.8S ribosomal RNAs and formation of the 60S ribosome. This is Ribosome biogenesis protein YTM1 from Podospora anserina (strain S / ATCC MYA-4624 / DSM 980 / FGSC 10383) (Pleurage anserina).